Here is a 200-residue protein sequence, read N- to C-terminus: GMP synthase [glutamine-hydrolyzing] subunit A (200 aa).

A Glutamine amidotransferase type-1 domain is found at 3–193 (KIYVVDNGGQ…IGICASYREI (191 aa)). The active-site Nucleophile is the C80. Active-site residues include H167 and E169.

As to quaternary structure, heterodimer composed of a glutamine amidotransferase subunit (A) and a GMP-binding subunit (B).

It carries out the reaction XMP + L-glutamine + ATP + H2O = GMP + L-glutamate + AMP + diphosphate + 2 H(+). The protein operates within purine metabolism; GMP biosynthesis; GMP from XMP (L-Gln route): step 1/1. In terms of biological role, catalyzes the synthesis of GMP from XMP. This chain is GMP synthase [glutamine-hydrolyzing] subunit A, found in Thermoplasma acidophilum (strain ATCC 25905 / DSM 1728 / JCM 9062 / NBRC 15155 / AMRC-C165).